Reading from the N-terminus, the 328-residue chain is Ketol-acid reductoisomerase (NADP(+)) (328 aa).

The KARI N-terminal Rossmann domain maps to 1-181; the sequence is MKIYYENDID…GLARAGVLET (181 aa). Residues 24–27, arginine 47, serine 52, and 82–85 contribute to the NADP(+) site; these read YGSQ and DEIQ. Residue histidine 107 is part of the active site. Glycine 133 contributes to the NADP(+) binding site. Residues 182 to 327 enclose the KARI C-terminal knotted domain; sequence TFREETETDL…SKLRKLCGLE (146 aa). Residues aspartate 190, glutamate 194, glutamate 226, and glutamate 230 each contribute to the Mg(2+) site. A substrate-binding site is contributed by serine 251.

Belongs to the ketol-acid reductoisomerase family. Mg(2+) serves as cofactor.

The catalysed reaction is (2R)-2,3-dihydroxy-3-methylbutanoate + NADP(+) = (2S)-2-acetolactate + NADPH + H(+). The enzyme catalyses (2R,3R)-2,3-dihydroxy-3-methylpentanoate + NADP(+) = (S)-2-ethyl-2-hydroxy-3-oxobutanoate + NADPH + H(+). It functions in the pathway amino-acid biosynthesis; L-isoleucine biosynthesis; L-isoleucine from 2-oxobutanoate: step 2/4. Its pathway is amino-acid biosynthesis; L-valine biosynthesis; L-valine from pyruvate: step 2/4. Involved in the biosynthesis of branched-chain amino acids (BCAA). Catalyzes an alkyl-migration followed by a ketol-acid reduction of (S)-2-acetolactate (S2AL) to yield (R)-2,3-dihydroxy-isovalerate. In the isomerase reaction, S2AL is rearranged via a Mg-dependent methyl migration to produce 3-hydroxy-3-methyl-2-ketobutyrate (HMKB). In the reductase reaction, this 2-ketoacid undergoes a metal-dependent reduction by NADPH to yield (R)-2,3-dihydroxy-isovalerate. The protein is Ketol-acid reductoisomerase (NADP(+)) of Methanothermobacter thermautotrophicus (strain ATCC 29096 / DSM 1053 / JCM 10044 / NBRC 100330 / Delta H) (Methanobacterium thermoautotrophicum).